Reading from the N-terminus, the 129-residue chain is M-zodatoxin-Lt8g (129 aa).

Residues 1–20 (MKYFVVALALVAAFACIAES) form the signal peptide. A propeptide spanning residues 21–60 (KPAESEHELAEVEEENELADLEDAVWLEHLADLSDLEEAR) is cleaved from the precursor. Residues 57–60 (EEAR) carry the Processing quadruplet motif motif.

Cleavage of the propeptide depends on the processing quadruplet motif (XXXR, with at least one of X being E). In terms of tissue distribution, expressed by the venom gland.

It is found in the secreted. Insecticidal, cytolytic and antimicrobial peptide. Has insecticidal activity against the flesh fly S.carnaria. Has antibacterial activity against the Gram-negative bacteria E.coli. Forms voltage-dependent, ion-permeable channels in membranes. At high concentration causes cell membrane lysis. This Lachesana tarabaevi (Spider) protein is M-zodatoxin-Lt8g (cit 1-8).